A 442-amino-acid chain; its full sequence is ATP-dependent protease ATPase subunit HslU (442 aa).

ATP-binding positions include isoleucine 18, 60-65 (GVGKTE), aspartate 255, glutamate 320, and arginine 392.

It belongs to the ClpX chaperone family. HslU subfamily. A double ring-shaped homohexamer of HslV is capped on each side by a ring-shaped HslU homohexamer. The assembly of the HslU/HslV complex is dependent on binding of ATP.

The protein resides in the cytoplasm. In terms of biological role, ATPase subunit of a proteasome-like degradation complex; this subunit has chaperone activity. The binding of ATP and its subsequent hydrolysis by HslU are essential for unfolding of protein substrates subsequently hydrolyzed by HslV. HslU recognizes the N-terminal part of its protein substrates and unfolds these before they are guided to HslV for hydrolysis. The sequence is that of ATP-dependent protease ATPase subunit HslU from Aeromonas salmonicida (strain A449).